Consider the following 248-residue polypeptide: 14-3-3-like protein G-BOX factor 14 kappa (248 aa).

Phosphoserine occurs at positions 70, 112, and 193. Threonine 214 is modified (phosphothreonine).

Belongs to the 14-3-3 family. In terms of assembly, interacts with the isocitrate dehydrogenase IDH3, and malate dehydrogenases MDH1 and MDH2. Interacts with CINV1.

It localises to the nucleus. Its subcellular location is the cytoplasm. In terms of biological role, is associated with a DNA binding complex that binds to the G box, a well-characterized cis-acting DNA regulatory element found in plant genes. Involved in the regulation of nutrient metabolism. Negative regulator of freezing tolerance that modulates cold-responsive C-repeat-binding factors (CBF) DREB1A AND DREB1B proteins stability by facilitating their ubiquitin-mediated degradation; this processus is counteracted by B1L. In Arabidopsis thaliana (Mouse-ear cress), this protein is 14-3-3-like protein G-BOX factor 14 kappa.